Here is a 293-residue protein sequence, read N- to C-terminus: DDRGK domain-containing protein 1 (293 aa).

Residues 1–6 lie on the Lumenal side of the membrane; that stretch reads MWGPLI. Residues 7 to 27 form a helical membrane-spanning segment; that stretch reads YALLGLAIVAAAFLFVRRSQA. Topologically, residues 28 to 293 are cytoplasmic; that stretch reads KEVVPVADDD…PADVDETTTA (266 aa). Disordered regions lie at residues 30 to 151 and 273 to 293; these read VVPV…RQKE and TDVE…TTTA. 2 stretches are compositionally biased toward basic and acidic residues: residues 90–126 and 133–151; these read KLQE…KERE and ERQR…RQKE.

The protein belongs to the DDRGK1 family.

The protein localises to the endoplasmic reticulum membrane. Functionally, substrate adapter for ufmylation, the covalent attachment of the ubiquitin-like modifier UFM1 to substrate proteins. The sequence is that of DDRGK domain-containing protein 1 from Monosiga brevicollis (Choanoflagellate).